Consider the following 84-residue polypeptide: U4-theraphotoxin-Hhn1b (84 aa).

A signal peptide spans M1–A22. A propeptide spanning residues E23–R47 is cleaved from the precursor. 3 disulfides stabilise this stretch: C51–C65, C55–C76, and C70–C81.

It belongs to the neurotoxin 12 (Hwtx-2) family. 02 (Hwtx-2) subfamily. In terms of tissue distribution, expressed by the venom gland.

The protein localises to the secreted. Its function is as follows. Postsynaptic neurotoxin. This Cyriopagopus hainanus (Chinese bird spider) protein is U4-theraphotoxin-Hhn1b.